Here is a 183-residue protein sequence, read N- to C-terminus: ATP-dependent protease subunit HslV (183 aa).

Residue T13 is part of the active site. Na(+) is bound by residues G168, C171, and T174.

It belongs to the peptidase T1B family. HslV subfamily. A double ring-shaped homohexamer of HslV is capped on each side by a ring-shaped HslU homohexamer. The assembly of the HslU/HslV complex is dependent on binding of ATP.

It is found in the cytoplasm. The catalysed reaction is ATP-dependent cleavage of peptide bonds with broad specificity.. Allosterically activated by HslU binding. Its function is as follows. Protease subunit of a proteasome-like degradation complex believed to be a general protein degrading machinery. The polypeptide is ATP-dependent protease subunit HslV (Stenotrophomonas maltophilia (strain R551-3)).